A 59-amino-acid chain; its full sequence is Large ribosomal subunit protein bL32 (59 aa).

The segment at 1 to 59 is disordered; sequence MAVQQNRKTRSKRGMRRSHDALSAAALSTDATTGEVHRRHHVSPDGFYRGKQVVEARDE. Residues 7–16 show a composition bias toward basic residues; the sequence is RKTRSKRGMR. Low complexity predominate over residues 21–33; that stretch reads ALSAAALSTDATT.

The protein belongs to the bacterial ribosomal protein bL32 family.

This chain is Large ribosomal subunit protein bL32, found in Marinobacter nauticus (strain ATCC 700491 / DSM 11845 / VT8) (Marinobacter aquaeolei).